A 134-amino-acid chain; its full sequence is Large ribosomal subunit protein mL41 (134 aa).

The transit peptide at 1–13 directs the protein to the mitochondrion; that stretch reads MGFLTAVTQGLVR.

Belongs to the mitochondrion-specific ribosomal protein mL41 family. Component of the mitochondrial ribosome large subunit (39S) which comprises a 16S rRNA and about 50 distinct proteins. Interacts with BCL2. Was also identified in the 28S mitochondrial ribosome.

It localises to the mitochondrion. Functionally, component of the mitochondrial ribosome large subunit. Also involved in apoptosis and cell cycle. Enhances p53/TP53 stability, thereby contributing to p53/TP53-induced apoptosis in response to growth-inhibitory condition. Enhances p53/TP53 translocation to the mitochondria. Has the ability to arrest the cell cycle at the G1 phase, possibly by stabilizing the CDKN1A and CDKN1B (p27Kip1) proteins. The sequence is that of Large ribosomal subunit protein mL41 (Mrpl41) from Rattus norvegicus (Rat).